A 63-amino-acid chain; its full sequence is Large ribosomal subunit protein uL29 (63 aa).

The protein belongs to the universal ribosomal protein uL29 family.

This chain is Large ribosomal subunit protein uL29, found in Idiomarina loihiensis (strain ATCC BAA-735 / DSM 15497 / L2-TR).